A 449-amino-acid chain; its full sequence is Signal recognition particle protein (449 aa).

Residues 109 to 116, 191 to 195, and 249 to 252 contribute to the GTP site; these read GLQGSGKT, DTAGR, and SRID.

The protein belongs to the GTP-binding SRP family. SRP54 subfamily. In terms of assembly, part of the signal recognition particle protein translocation system, which is composed of SRP and FtsY. SRP is a ribonucleoprotein composed of Ffh and a 4.5S RNA molecule.

The protein resides in the cytoplasm. It carries out the reaction GTP + H2O = GDP + phosphate + H(+). Functionally, involved in targeting and insertion of nascent membrane proteins into the cytoplasmic membrane. Binds to the hydrophobic signal sequence of the ribosome-nascent chain (RNC) as it emerges from the ribosomes. The SRP-RNC complex is then targeted to the cytoplasmic membrane where it interacts with the SRP receptor FtsY. Interaction with FtsY leads to the transfer of the RNC complex to the Sec translocase for insertion into the membrane, the hydrolysis of GTP by both Ffh and FtsY, and the dissociation of the SRP-FtsY complex into the individual components. The sequence is that of Signal recognition particle protein from Rickettsia felis (strain ATCC VR-1525 / URRWXCal2) (Rickettsia azadi).